The following is a 307-amino-acid chain: Ubiquinol oxidase subunit 2 (307 aa).

A signal peptide spans Met-1–Gly-23. The N-palmitoyl cysteine moiety is linked to residue Cys-24. The S-diacylglycerol cysteine moiety is linked to residue Cys-24. 2 helical membrane-spanning segments follow: residues Ser-46–Trp-66 and Ile-87–Tyr-107.

The protein belongs to the cytochrome c oxidase subunit 2 family. In terms of assembly, heterotetramer of the subunits 1, 2, 3 and 4.

It is found in the cell membrane. The sequence is that of Ubiquinol oxidase subunit 2 (cyaB) from Acetobacter aceti.